Consider the following 1450-residue polypeptide: MAEAGDAALSVAEWLRALHLEQYTGLFEQHGLVWATECQGLSDTRLMDMGMLLPGHRRRILAGLLRAHTSPAPAPRPTPRPVPMKRHIFRSPPVPATPPEPLPTTTEDEGLPAAPPIPPRRSCLPPTCFTTPSTAAPDPVLPPLPAKRHLAELSVPPVPPRTGPPRLLVSLPTKEEESLLPSLSSPPQPQSEEPLSTLPQGPPQPPSPPPCPPEIPPKPVRLFPEFDDSDYDEVPEEGPGAPARVMTKKEEPPPSRVPRAVRVASLLSEGEELSGDDQGDEEEDDHAYEGVPNGGWHTSSLSLSLPSTIAAPHPMDGPPGGSTPVTPVIKAGWLDKNPPQGSYIYQKRWVRLDTDHLRYFDSNKDAYSKRFISVACISHVAAIGDQKFEVITNNRTFAFRAESDVERKEWMQALQQAMAEQRARARLSSAYLLGVPGSEQPDRAGSLELRGFKNKLYVAVVGDKVQLYKNLEEYHLGIGITFIDMSVGNVKEVDRRSFDLTTPYRIFSFSADSELEKEQWLEAMQGAIAEALSTSEVAERIWAAAPNRFCADCGAPQPDWASINLCVVICKRCAGEHRGLGAGVSKVRSLKMDRKVWTETLIELFLQLGNGAGNRFWAANVPPSEALQPSSSPSTRRCHLEAKYREGKYRRYHPLFGNQEELDKALCAAVTTTDLAETQALLGCGAGINCFSGDPEAPTPLALAEQAGQTLQMEFLRNNRTTEVPRLDSMKPLEKHYSVVLPTVSHSGFLYKTASAGKLLQDRRAREEFSRRWCVLGDGVLSYFENERAVTPNGEIRASEIVCLAVPPPDTHGFEHTFEVYTEGERLYLFGLESAEQAHEWVKCIAKAFVPPLAEDLLARDFERLGRLPYKAGLSLQRAQEGWFSLSGSELRAVFPEGPCEEPLQLRKLQELSIQGDSENQVLVLVERRRTLYIQGERRLDFMGWLGAIQKAAASMGDTLSEQQLGDSDIPVIVYRCVDYITQCGLTSEGIYRKCGQTSKTQRLLESLRQDARSVHLKEGEQHVDDVSSALKRFLRDLPDGLFTRAQRLTWLEASEIEDEEEKVSRYRELLVRLPPVNRATVKALISHLYCVQCFSDTNQMNVHNLAIVFGPTLFQTDGQDYKAGRVVEDLINHYVVVFSVDEEELRKQREEITAIVKMRVAGTASGTQHAGDFICTVYLEEKKAETEQHIKVPASMTAEELTLEILDRRNVGIREKDYWTCFEVNEREEAERPLHFAEKVLPILHGLGTDSHLVVKKHQAMEAMLLYLASRVGDTKHGMMKFREDRSLLGLGLPSGGFHDRYFILNSSCLRLYKEVRSQRPWSGAPETSHRPEKEWPIKSLKVYLGVKKKLRPPTCWGFTVVHETEKHEKQQWYLCCDTQMELREWFATFLFVQHDGLVWPSEPSRVSRAVPEVRLGSVSLIPLRGSENEMRRSVAAFTADPLSLLRNV.

Positions 6-70 (DAALSVAEWL…LAGLLRAHTS (65 aa)) constitute an SAM domain. The segment at 81–90 (PVPMKRHIFR) is required for interaction with SH3KBP1. 2 disordered regions span residues 89 to 144 (FRSP…LPPL) and 173 to 302 (TKEE…SSLS). Over residues 92-102 (PPVPATPPEPL) the composition is skewed to pro residues. Positions 190–199 (QSEEPLSTLP) are enriched in low complexity. Residues 200-219 (QGPPQPPSPPPCPPEIPPKP) show a composition bias toward pro residues. Composition is skewed to acidic residues over residues 225–236 (EFDDSDYDEVPE) and 269–286 (EGEELSGDDQGDEEEDDH). Serine 229 carries the post-translational modification Phosphoserine. At tyrosine 231 the chain carries Phosphotyrosine; by PTK6. A PH 1 domain is found at 327–419 (PVIKAGWLDK…WMQALQQAMA (93 aa)). Threonine 354 carries the phosphothreonine modification. Residue serine 428 is modified to Phosphoserine. Phosphotyrosine occurs at positions 431 and 504. The region spanning 440 to 529 (QPDRAGSLEL…WLEAMQGAIA (90 aa)) is the PH 2 domain. Residues 535–660 (SEVAERIWAA…RYHPLFGNQE (126 aa)) enclose the Arf-GAP domain. Residues 550-576 (CADCGAPQPDWASINLCVVICKRCAGE) form a C4-type zinc finger. Serine 738 is subject to Phosphoserine. Positions 743–850 (TVSHSGFLYK…WVKCIAKAFV (108 aa)) constitute a PH 3 domain. Positions 954–1139 (ASMGDTLSEQ…DLINHYVVVF (186 aa)) constitute a Rho-GAP domain. The Ras-associating domain maps to 1172-1261 (GDFICTVYLE…SHLVVKKHQA (90 aa)). The region spanning 1274–1396 (GDTKHGMMKF…WFATFLFVQH (123 aa)) is the PH 4 domain. Phosphoserine is present on residues serine 1428 and serine 1435.

As to quaternary structure, interacts with SH3KBP1/CIN85 (via SH3 domains). The interaction is independent of EGF and does not affect ARAP1 GTPase-activating activity but is involved in regulating ubiquitination and endocytic trafficking of EGFR. ARAP1 competes with E3 ubiquitin-protein ligase CBL for binding to SH3KBP1, preventing interaction of CBL with SH3KBP1; this is likely to regulate SH3KBP1-mediated internalization of EGFR. Interacts with TNFRSF10A. Phosphorylated by PTK6 following EGF stimulation which enhances EGFR signaling by delaying EGFR down-regulation; the interaction is mediated by the SH2 domain of PTK6. Phosphorylation promotes association with the Golgi apparatus and endosomes. Detected in heart, skeletal muscle, spleen, kidney, liver, placenta, lung, peripheral blood leukocytes, adrenal gland, bone marrow, brain, lymph node, mammary gland, prostate, spinal cord, stomach, thyroid and trachea.

The protein resides in the cytoplasm. It is found in the golgi apparatus. It localises to the trans-Golgi network. The protein localises to the golgi stack. Its subcellular location is the cell membrane. The protein resides in the endosome. It is found in the multivesicular body. It localises to the cell projection. The protein localises to the ruffle. Its subcellular location is the podosome. The protein resides in the early endosome. In terms of biological role, phosphatidylinositol 3,4,5-trisphosphate-dependent GTPase-activating protein that modulates actin cytoskeleton remodeling by regulating ARF and RHO family members. Activated by phosphatidylinositol 3,4,5-trisphosphate (PtdIns(3,4,5)P3) binding and, to a lesser extent, by phosphatidylinositol 3,4-bisphosphate (PtdIns(3,4)P2) binding. Has a preference for ARF1 and ARF5. Positively regulates the ring size of circular dorsal ruffles and promotes macropinocytosis. Acts as a bridging factor in osteoclasts to control actin and membrane dynamics. Regulates the condensing of osteoclast podosomes into sealing zones which segregate the bone-facing membrane from other membrane domains and are required for osteoclast resorption activity. Also regulates recruitment of the AP-3 complex to endosomal membranes and trafficking of lysosomal membrane proteins to the ruffled membrane border of osteoclasts to modulate bone resorption. Regulates the endocytic trafficking of EGFR. Regulates the incorporation of CD63 and CD9 into multivesicular bodies. Required in the retinal pigment epithelium (RPE) for photoreceptor survival due to its role in promoting RPE phagocytosis. The chain is Arf-GAP with Rho-GAP domain, ANK repeat and PH domain-containing protein 1 (ARAP1) from Homo sapiens (Human).